Consider the following 467-residue polypeptide: UDP-N-acetylmuramate--L-alanine ligase (467 aa).

114–120 (GTHGKTT) contacts ATP.

It belongs to the MurCDEF family.

It is found in the cytoplasm. It carries out the reaction UDP-N-acetyl-alpha-D-muramate + L-alanine + ATP = UDP-N-acetyl-alpha-D-muramoyl-L-alanine + ADP + phosphate + H(+). It functions in the pathway cell wall biogenesis; peptidoglycan biosynthesis. Cell wall formation. The sequence is that of UDP-N-acetylmuramate--L-alanine ligase from Rhodopseudomonas palustris (strain BisB5).